The chain runs to 61 residues: Small ribosomal subunit protein uS14 (61 aa).

Zn(2+) is bound by residues cysteine 24, cysteine 27, cysteine 40, and cysteine 43.

This sequence belongs to the universal ribosomal protein uS14 family. Zinc-binding uS14 subfamily. Part of the 30S ribosomal subunit. Contacts proteins S3 and S10. Zn(2+) serves as cofactor.

In terms of biological role, binds 16S rRNA, required for the assembly of 30S particles and may also be responsible for determining the conformation of the 16S rRNA at the A site. The sequence is that of Small ribosomal subunit protein uS14 from Desulfotalea psychrophila (strain LSv54 / DSM 12343).